Reading from the N-terminus, the 978-residue chain is MFSTTVAEFANELKKSTATLLEQLKSAGVAKTAASDKLNDADKQRLLSYLQSTHGAAGAERKKITLVKKSTTEIKQADASGKARTIQVEVRKKRTFIRRDDGVEVSAEAPALETEQEVEAAPQVDNLELARREEEARRQAELIRRQEEELSERRRQREEQEARSREASEKAAAVAAEAAEAAAAQALKKKSKPVAPEQPAPNPTEIETAKVLAAAEKEQHLAKEKGLAREKELAESKARAAEDVVRAADLGDRRRKAESEAAAIRLMMSSPAKKAPPPPKKPEEVKPAMKGTLHKPAAGAVPAKPAKPGAPGAPGAPAAGAAAGAGKEVKSAKLSSSWAGDPAKKKGIPTRGATAAPGAGRSTNWRAPARGGRRGSSDRDRDDHRVQAAPVEQRVIEVHVPETITVAELAHKMAVKASEVIKHLMKLGQMVTINQPLDQDTAMILVEEMGHKAIVAALDDPEAFTVDEVSQQQSESLPRAPVVTVMGHVDHGKTSLLDYIRRAKVATGEAGGITQHIGAYHVETDRGMISFLDTPGHEAFTAMRARGAKATDIVILVVAADDGVMPQTKEAIKHARAAGVPIVVAINKIDKPDANPERVKNELVVEEVVPEEFGGDSPFVPVSAKTGQGIDALLEQVLLQAEVLELKAPVDAMAKGLVIEAQLDKGRGPVATVLVQSGTLKTGDIVLAGSTYGRVRAMLDENGRTIKTAGPSIPVEIQGLTEVPQAGDEFMVMADERRAREIATYRAGKFRHTKLAKQQAAKLENMFTDMAAGEVKMVPIIIKADVQGSQEALAQSLLKLSTDEVKVQLVYTAVGAISESDVNLAIASKAVIIGFNTRADAGARKLAENNGVDIRYYDIIYDAVDELKLAMSGMLTPDKKEEVIGTAEIRQIFKVSKIGSIAGCMVTAGVVRRTARLRLLRDNMVIFTGELDSLKRFKDDVREVREGFDCGLNIKNYNDIQEGDVLEFFEIREVARTL.

Disordered regions lie at residues 107–129 (AEAPALETEQEVEAAPQVDNLEL) and 146–387 (QEEE…HRVQ). A compositionally biased stretch (basic and acidic residues) spans 146-169 (QEEELSERRRQREEQEARSREASE). The segment covering 170–186 (KAAAVAAEAAEAAAAQA) has biased composition (low complexity). A compositionally biased stretch (basic and acidic residues) spans 215–259 (AEKEQHLAKEKGLAREKELAESKARAAEDVVRAADLGDRRRKAES). 2 stretches are compositionally biased toward low complexity: residues 295 to 326 (KPAAGAVPAKPAKPGAPGAPGAPAAGAAAGAG) and 349 to 361 (PTRGATAAPGAGR). The span at 375–386 (GSSDRDRDDHRV) shows a compositional bias: basic and acidic residues. Positions 478 to 647 (PRAPVVTVMG…LLQAEVLELK (170 aa)) constitute a tr-type G domain. The G1 stretch occupies residues 487–494 (GHVDHGKT). A GTP-binding site is contributed by 487 to 494 (GHVDHGKT). Residues 512 to 516 (GITQH) are G2. A G3 region spans residues 533-536 (DTPG). GTP-binding positions include 533-537 (DTPGH) and 587-590 (NKID). Positions 587–590 (NKID) are G4. Positions 623-625 (SAK) are G5.

Belongs to the TRAFAC class translation factor GTPase superfamily. Classic translation factor GTPase family. IF-2 subfamily.

The protein localises to the cytoplasm. Functionally, one of the essential components for the initiation of protein synthesis. Protects formylmethionyl-tRNA from spontaneous hydrolysis and promotes its binding to the 30S ribosomal subunits. Also involved in the hydrolysis of GTP during the formation of the 70S ribosomal complex. The chain is Translation initiation factor IF-2 from Albidiferax ferrireducens (strain ATCC BAA-621 / DSM 15236 / T118) (Rhodoferax ferrireducens).